The sequence spans 267 residues: Tetrahydromethanopterin S-methyltransferase subunit C (267 aa).

7 helical membrane passes run 19–39 (IMAL…FAPP), 75–95 (IGML…SVGG), 97–117 (AGPI…GALA), 140–160 (TLVI…ASVV), 162–182 (YVVA…GILH), 198–218 (LMLA…ASSL), and 221–241 (GLMA…VAFS).

The protein belongs to the MtrC family. As to quaternary structure, the complex is composed of 8 subunits; MtrA, MtrB, MtrC, MtrD, MtrE, MtrF, MtrG and MtrH.

The protein resides in the cell membrane. It carries out the reaction 5-methyl-5,6,7,8-tetrahydromethanopterin + coenzyme M + 2 Na(+)(in) = 5,6,7,8-tetrahydromethanopterin + methyl-coenzyme M + 2 Na(+)(out). It participates in one-carbon metabolism; methanogenesis from CO(2); methyl-coenzyme M from 5,10-methylene-5,6,7,8-tetrahydromethanopterin: step 2/2. Functionally, part of a complex that catalyzes the formation of methyl-coenzyme M and tetrahydromethanopterin from coenzyme M and methyl-tetrahydromethanopterin. This is an energy-conserving, sodium-ion translocating step. This chain is Tetrahydromethanopterin S-methyltransferase subunit C, found in Methanosarcina barkeri (strain Fusaro / DSM 804).